Here is a 263-residue protein sequence, read N- to C-terminus: ATP synthase subunit a (263 aa).

A run of 6 helical transmembrane segments spans residues 26-46, 86-106, 130-150, 166-186, 195-215, and 229-249; these read VHLD…FFFS, VAPL…IDLI, DISA…FYTI, PFNH…TLLA, LFGN…MYMA, and LAWA…FMML.

This sequence belongs to the ATPase A chain family. F-type ATPases have 2 components, CF(1) - the catalytic core - and CF(0) - the membrane proton channel. CF(1) has five subunits: alpha(3), beta(3), gamma(1), delta(1), epsilon(1). CF(0) has three main subunits: a(1), b(2) and c(9-12). The alpha and beta chains form an alternating ring which encloses part of the gamma chain. CF(1) is attached to CF(0) by a central stalk formed by the gamma and epsilon chains, while a peripheral stalk is formed by the delta and b chains.

It is found in the cell inner membrane. Functionally, key component of the proton channel; it plays a direct role in the translocation of protons across the membrane. The sequence is that of ATP synthase subunit a from Glaesserella parasuis serovar 5 (strain SH0165) (Haemophilus parasuis).